A 199-amino-acid polypeptide reads, in one-letter code: Photosystem I reaction center subunit XI (199 aa).

A run of 2 helical transmembrane segments spans residues 108–128 (VTAG…LLVL) and 165–185 (FWLG…TLHL).

It belongs to the PsaL family.

It localises to the cellular thylakoid membrane. The chain is Photosystem I reaction center subunit XI from Prochlorococcus marinus (strain MIT 9215).